The following is a 106-amino-acid chain: PAT complex subunit Asterix (106 aa).

Residues 1-29 (MSTNNMSDPRRPNKVLRYKPPPSECNPAL) are disordered. The residue at position 2 (serine 2) is an N-acetylserine. Residues 2-32 (STNNMSDPRRPNKVLRYKPPPSECNPALDDP) lie on the Cytoplasmic side of the membrane. The chain crosses the membrane as a helical span at residues 33–51 (TPDYMNLLGMIFSMCGLML). Position 52 (lysine 52) is a topological domain, lumenal. A helical membrane pass occupies residues 53-70 (LKWCAWVAVYCSFISFAN). At 71–74 (SRSS) the chain is on the cytoplasmic side. Residues 75–95 (EDTKQMMSSFMLSISAVVMSY) form a helical membrane-spanning segment. The Lumenal segment spans residues 96-106 (LQNPQPMTPPW).

Belongs to the Asterix family. Component of the PAT complex, composed of WDR83OS/Asterix and CCDC47. The PAT complex is part of the multi-pass translocon (MPT) complex, composed of three subcomplexes, the GEL complex (composed of RAB5IF/OPTI and TMCO1), the BOS complex (composed of NCLN/Nicalin, NOMO1 and TMEM147) and the PAT complex (composed of WDR83OS/Asterix and CCDC47). The MPT complex associates with the SEC61 complex.

The protein resides in the endoplasmic reticulum membrane. Component of the multi-pass translocon (MPT) complex that mediates insertion of multi-pass membrane proteins into the lipid bilayer of membranes. The MPT complex takes over after the SEC61 complex: following membrane insertion of the first few transmembrane segments of proteins by the SEC61 complex, the MPT complex occludes the lateral gate of the SEC61 complex to promote insertion of subsequent transmembrane regions. Within the MPT complex, the PAT subcomplex sequesters any highly polar regions in the transmembrane domains away from the non-polar membrane environment until they can be buried in the interior of the fully assembled protein. Within the PAT subcomplex, WDR83OS/Asterix binds to and redirects the substrate to a location behind the SEC61 complex. In Canis lupus familiaris (Dog), this protein is PAT complex subunit Asterix (WDR83OS).